A 78-amino-acid chain; its full sequence is Large ribosomal subunit protein bL28 (78 aa).

The segment at 1-28 is disordered; it reads MSAYCQVTGRKPGFGKQVSHSHRHTSRR.

The protein belongs to the bacterial ribosomal protein bL28 family.

The sequence is that of Large ribosomal subunit protein bL28 from Corynebacterium urealyticum (strain ATCC 43042 / DSM 7109).